We begin with the raw amino-acid sequence, 843 residues long: Protein P (843 aa).

Residues 1–177 (MPLSYQHFRK…FCGSPYSWEQ (177 aa)) form a terminal protein domain (TP) region. A spacer region spans residues 178–346 (ELQHGRLVFQ…YCLSHIVNLL (169 aa)). Disordered regions lie at residues 218-243 (LKQSRLGLQPQQGSLARGKSGRSGSI) and 290-316 (STSKRQSSSGHAVELHNIPPSSARSQS). The span at 290–299 (STSKRQSSSG) shows a compositional bias: polar residues. Positions 347–690 (EDWGPCTEHG…YLHLYPVARQ (344 aa)) are polymerase/reverse transcriptase domain (RT). The 244-residue stretch at 357-600 (EHNIRIPRTP…YSLNFMGYVI (244 aa)) folds into the Reverse transcriptase domain. Residues Asp-429, Asp-551, and Asp-552 each coordinate Mg(2+).

Belongs to the hepadnaviridae P protein family.

The enzyme catalyses DNA(n) + a 2'-deoxyribonucleoside 5'-triphosphate = DNA(n+1) + diphosphate. The catalysed reaction is Endonucleolytic cleavage to 5'-phosphomonoester.. Its activity is regulated as follows. Activated by host HSP70 and HSP40 in vitro to be able to bind the epsilon loop of the pgRNA. Because deletion of the RNase H region renders the protein partly chaperone-independent, the chaperones may be needed indirectly to relieve occlusion of the RNA-binding site by this domain. Inhibited by several reverse-transcriptase inhibitors: Lamivudine, Adefovir and Entecavir. Multifunctional enzyme that converts the viral RNA genome into dsDNA in viral cytoplasmic capsids. This enzyme displays a DNA polymerase activity that can copy either DNA or RNA templates, and a ribonuclease H (RNase H) activity that cleaves the RNA strand of RNA-DNA heteroduplexes in a partially processive 3'- to 5'-endonucleasic mode. Neo-synthesized pregenomic RNA (pgRNA) are encapsidated together with the P protein, and reverse-transcribed inside the nucleocapsid. Initiation of reverse-transcription occurs first by binding the epsilon loop on the pgRNA genome, and is initiated by protein priming, thereby the 5'-end of (-)DNA is covalently linked to P protein. Partial (+)DNA is synthesized from the (-)DNA template and generates the relaxed circular DNA (RC-DNA) genome. After budding and infection, the RC-DNA migrates in the nucleus, and is converted into a plasmid-like covalently closed circular DNA (cccDNA). The activity of P protein does not seem to be necessary for cccDNA generation, and is presumably released from (+)DNA by host nuclear DNA repair machinery. This is Protein P from Homo sapiens (Human).